The chain runs to 503 residues: Cytochrome P450 11B1, mitochondrial (503 aa).

Residues 1-24 constitute a mitochondrion transit peptide; that stretch reads MALWAKARVWMAGPWLSLHRARPL. Cys450 contributes to the heme binding site.

The protein belongs to the cytochrome P450 family. The cofactor is heme.

It is found in the mitochondrion inner membrane. The catalysed reaction is a steroid + 2 reduced [adrenodoxin] + O2 + 2 H(+) = an 11beta-hydroxysteroid + 2 oxidized [adrenodoxin] + H2O. The enzyme catalyses 11-deoxycortisol + 2 reduced [adrenodoxin] + O2 + 2 H(+) = cortisol + 2 oxidized [adrenodoxin] + H2O. It catalyses the reaction 21-hydroxyprogesterone + 2 reduced [adrenodoxin] + O2 + 2 H(+) = corticosterone + 2 oxidized [adrenodoxin] + H2O. It carries out the reaction corticosterone + 2 reduced [adrenodoxin] + O2 + 2 H(+) = 18-hydroxycorticosterone + 2 oxidized [adrenodoxin] + H2O. The catalysed reaction is 18-hydroxycorticosterone + 2 reduced [adrenodoxin] + O2 + 2 H(+) = aldosterone + 2 oxidized [adrenodoxin] + 2 H2O. The enzyme catalyses 21-hydroxyprogesterone + 2 reduced [adrenodoxin] + O2 + 2 H(+) = 19-hydroxy-11-deoxycorticosterone + 2 oxidized [adrenodoxin] + H2O. It catalyses the reaction 19-hydroxy-11-deoxycorticosterone + 2 reduced [adrenodoxin] + O2 + 2 H(+) = 19-oxo-11-deoxycorticosterone + 2 oxidized [adrenodoxin] + 2 H2O. Its pathway is steroid biosynthesis; glucocorticoid biosynthesis. It functions in the pathway steroid hormone biosynthesis. Its function is as follows. A cytochrome P450 monooxygenase that catalyzes the biosynthesis of aldosterone and other adrenal corticoids. Differing from other species (such as human, rat and mice), it is able to catalyze three sequential oxidative reactions of 11-deoxycorticosterone (21-hydroxyprogesterone), namely 11-beta hydroxylation, followed by two successive oxidations at C18 yielding 18-hydroxy and then 18-oxo intermediates, and ending with the formation of aldosterone. Steroid 11beta, 18- and 19-hydroxylase. Mechanistically, uses molecular oxygen inserting one oxygen atom into a substrate and reducing the second into a water molecule. Two electrons are provided by NADPH via a two-protein mitochondrial transfer system comprising flavoprotein FDXR (adrenodoxin/ferredoxin reductase) and nonheme iron-sulfur protein FDX1 or FDX2 (adrenodoxin/ferredoxin). The chain is Cytochrome P450 11B1, mitochondrial (CYP11B1) from Ovis aries (Sheep).